A 208-amino-acid chain; its full sequence is Glycerol-3-phosphate acyltransferase (208 aa).

5 helical membrane-spanning segments follow: residues 3–23, 51–71, 78–98, 115–135, and 140–160; these read ILLA…VVVS, KAAI…VWLA, DVAI…PVFF, AVHP…AFFF, and LAAL…FGMP.

It belongs to the PlsY family. As to quaternary structure, probably interacts with PlsX.

It localises to the cell inner membrane. The enzyme catalyses an acyl phosphate + sn-glycerol 3-phosphate = a 1-acyl-sn-glycero-3-phosphate + phosphate. The protein operates within lipid metabolism; phospholipid metabolism. In terms of biological role, catalyzes the transfer of an acyl group from acyl-phosphate (acyl-PO(4)) to glycerol-3-phosphate (G3P) to form lysophosphatidic acid (LPA). This enzyme utilizes acyl-phosphate as fatty acyl donor, but not acyl-CoA or acyl-ACP. The chain is Glycerol-3-phosphate acyltransferase from Burkholderia orbicola (strain MC0-3).